Reading from the N-terminus, the 1345-residue chain is Probable membrane antigen 75 (1345 aa).

The protein localises to the virion tegument. This is Probable membrane antigen 75 (75) from Equine herpesvirus 2 (strain 86/87) (EHV-2).